We begin with the raw amino-acid sequence, 241 residues long: Probable septum site-determining protein MinC (241 aa).

The tract at residues 109 to 135 is disordered; the sequence is PSGARERKVDPSSKTPAKPAEPTYRPT.

It belongs to the MinC family. As to quaternary structure, interacts with MinD and FtsZ.

Its function is as follows. Cell division inhibitor that blocks the formation of polar Z ring septums. Rapidly oscillates between the poles of the cell to destabilize FtsZ filaments that have formed before they mature into polar Z rings. Prevents FtsZ polymerization. The polypeptide is Probable septum site-determining protein MinC (Stutzerimonas stutzeri (strain A1501) (Pseudomonas stutzeri)).